A 62-amino-acid polypeptide reads, in one-letter code: Synergistic-type venom protein C8S2, chain 1 (62 aa).

3 disulfide bridges follow: cysteine 3–cysteine 24, cysteine 17–cysteine 42, and cysteine 46–cysteine 57.

The protein belongs to the three-finger toxin family. Short-chain subfamily. Aminergic toxin sub-subfamily. As to quaternary structure, heterodimer of C8S2 chain 1 and chain 2 (AC P01411); disulfide-linked. In terms of tissue distribution, expressed by the venom gland.

The protein resides in the secreted. This protein shows a synergetic toxic effect in that it enhances the toxicity of other toxins. In Dendroaspis angusticeps (Eastern green mamba), this protein is Synergistic-type venom protein C8S2, chain 1.